Here is a 36-residue protein sequence, read N- to C-terminus: Pancreatic polypeptide (36 aa).

Tyr-36 is modified (tyrosine amide).

It belongs to the NPY family.

The protein localises to the secreted. Functionally, hormone secreted by pancreatic cells that acts as a regulator of pancreatic and gastrointestinal functions. The chain is Pancreatic polypeptide (PPY) from Anser anser anser (Western greylag goose).